Here is a 264-residue protein sequence, read N- to C-terminus: uncharacterized protein (264 aa).

The next 4 helical transmembrane spans lie at 43–63 (VVAA…LYLI), 68–88 (FLPS…LLGI), 96–116 (ILPA…LGCI), and 150–170 (LAAK…VLAV). The tract at residues 216–247 (SYEDALKNSSQQPSTSSSSSSPPSRPPHSVYT) is disordered. The span at 224–237 (SSQQPSTSSSSSSP) shows a compositional bias: low complexity.

Its subcellular location is the membrane. This is an uncharacterized protein from Caenorhabditis elegans.